The primary structure comprises 452 residues: Caspase-2 (452 aa).

At Ala-2 the chain carries N-acetylalanine. The propeptide occupies 2-169; that stretch reads AAPSAGSWST…TVEHSLDNKD (168 aa). Positions 32 to 121 constitute a CARD domain; sequence MHPHHQETLK…GHLEDMLLTT (90 aa). Ser-157 is subject to Phosphoserine. Catalysis depends on residues His-277 and Cys-320. Residues 326–333 constitute a propeptide that is removed on maturation; that stretch reads DRGVDQQD. Residues 327-336 are compositionally biased toward basic and acidic residues; the sequence is RGVDQQDGKN. The tract at residues 327 to 354 is disordered; that stretch reads RGVDQQDGKNHAGSPGCEESDAGKEKLP. At Ser-340 the chain carries Phosphoserine.

It belongs to the peptidase C14A family. Heterotetramer that consists of two anti-parallel arranged heterodimers, each one formed by a p18 subunit and a p12 subunit. Forms a complex named the PIDDosome with PIDD1 and CRADD. Interacts with NOL3 (via CARD domain); inhibits CASP2 activity in a phosphorylation-dependent manner. The mature protease can process its own propeptide, but not that of other caspases. Expressed at higher levels in the embryonic lung, liver and kidney than in the heart and brain. In adults, higher level expression is seen in the placenta, lung, kidney, and pancreas than in the heart, brain, liver and skeletal muscle.

The catalysed reaction is Strict requirement for an Asp residue at P1, with 316-Asp being essential for proteolytic activity and has a preferred cleavage sequence of Val-Asp-Val-Ala-Asp-|-.. In terms of biological role, is a regulator of the cascade of caspases responsible for apoptosis execution. Might function by either activating some proteins required for cell death or inactivating proteins necessary for cell survival. Associates with PIDD1 and CRADD to form the PIDDosome, a complex that activates CASP2 and triggers apoptosis in response to genotoxic stress. Acts as a positive regulator of apoptosis. Functionally, acts as a negative regulator of apoptosis. Its function is as follows. May function as an endogenous apoptosis inhibitor that antagonizes caspase activation and cell death. This is Caspase-2 (CASP2) from Homo sapiens (Human).